The sequence spans 689 residues: Glycine--tRNA ligase beta subunit (689 aa).

This sequence belongs to the class-II aminoacyl-tRNA synthetase family. In terms of assembly, tetramer of two alpha and two beta subunits.

The protein localises to the cytoplasm. It carries out the reaction tRNA(Gly) + glycine + ATP = glycyl-tRNA(Gly) + AMP + diphosphate. The protein is Glycine--tRNA ligase beta subunit of Actinobacillus pleuropneumoniae serotype 5b (strain L20).